We begin with the raw amino-acid sequence, 473 residues long: Photosystem II CP43 reaction center protein (473 aa).

The propeptide occupies 1–14; it reads MKTLYSLRRFYHVE. The residue at position 15 (threonine 15) is an N-acetylthreonine. Threonine 15 carries the post-translational modification Phosphothreonine. The next 5 membrane-spanning stretches (helical) occupy residues 69 to 93, 134 to 155, 178 to 200, 255 to 275, and 291 to 312; these read LFEV…PHLA, LIGP…RDKN, KAIY…RIID, KPFA…LSYS, and WYNN…ASQS. Glutamate 367 is a binding site for [CaMn4O5] cluster. Residues 447-471 form a helical membrane-spanning segment; sequence RARAAAAGFEKGINRENEPVLTLRP.

It belongs to the PsbB/PsbC family. PsbC subfamily. As to quaternary structure, PSII is composed of 1 copy each of membrane proteins PsbA, PsbB, PsbC, PsbD, PsbE, PsbF, PsbH, PsbI, PsbJ, PsbK, PsbL, PsbM, PsbT, PsbX, PsbY, PsbZ, Psb30/Ycf12, at least 3 peripheral proteins of the oxygen-evolving complex and a large number of cofactors. It forms dimeric complexes. Binds multiple chlorophylls and provides some of the ligands for the Ca-4Mn-5O cluster of the oxygen-evolving complex. It may also provide a ligand for a Cl- that is required for oxygen evolution. PSII binds additional chlorophylls, carotenoids and specific lipids. serves as cofactor.

The protein resides in the plastid. The protein localises to the chloroplast thylakoid membrane. Functionally, one of the components of the core complex of photosystem II (PSII). It binds chlorophyll and helps catalyze the primary light-induced photochemical processes of PSII. PSII is a light-driven water:plastoquinone oxidoreductase, using light energy to abstract electrons from H(2)O, generating O(2) and a proton gradient subsequently used for ATP formation. This is Photosystem II CP43 reaction center protein from Guillardia theta (Cryptophyte).